Consider the following 215-residue polypeptide: Short neuropeptide F (215 aa).

Residues 1-22 (MCRINFTTLSLILVLWSGSLMS) form the signal peptide. Residues 23 to 56 (EPSQNADGSIKGLYEYLLQREYAAPVSYADHQIK) constitute a propeptide that is removed on maturation. 2 positions are modified to phenylalanine amide: phenylalanine 69 and phenylalanine 101. A Tryptophan amide modification is found at tryptophan 129. Phenylalanine 157 is subject to Phenylalanine amide. A propeptide spanning residues 160–215 (SDPSWAMFNEHQLDEQQFADATRQPSKTLRGDEPTSIESTEQVESEENSPSNMDEK) is cleaved from the precursor. The segment at 173–215 (DEQQFADATRQPSKTLRGDEPTSIESTEQVESEENSPSNMDEK) is disordered.

The protein belongs to the NPY family.

Its subcellular location is the secreted. Its function is as follows. Plays a role in controlling food intake and regulating body size. The chain is Short neuropeptide F from Aedes aegypti (Yellowfever mosquito).